The following is a 490-amino-acid chain: MDPFVVLVLCLSFVLLFSLWRQSSGRRKLPPGPTPLPIIGNILQIDVKDICKSFSNFSKVYGPVFTVYFGMNPVVVLHGYETVKEALIDNAEEFSGRGILPISERITNGLGIISSNGKRWKETRRFSLTTLRNFGMGKRSIEDRVQEEARCLVEELRKTKASPCDPTFILGCAPCNVICSVVFQKRFDYKDENFLTLIKRFTVNFRILTSPWIQVCNNFPLLIDCFPGTHNKLLKNVALTKSYIREKVKEHQATLDVNNPRDFIDCFLIKMEQEKDNQQSEFTIENLVGTVADLFVAGTETTSTTLRYGLLLLLKHPEVTAKVQEEIDHVIGRHRSPCMQDRSHMPYTDAVIHEIQRYIDLVPTGVPHAVTTDIKFRNYLIPKGTIIITLLTSVLHDDKEFPNPKIFDPGHFLDENGNFKKSDYFMPFSAGKRICAGEGLARMELFLFLTTILQNFNLKSVADLKNLNTTSATRGIISLPPSYQICFIPV.

A heme-binding site is contributed by Cys-435.

It belongs to the cytochrome P450 family. Heme is required as a cofactor.

Its subcellular location is the endoplasmic reticulum membrane. It localises to the microsome membrane. It catalyses the reaction an organic molecule + reduced [NADPH--hemoprotein reductase] + O2 = an alcohol + oxidized [NADPH--hemoprotein reductase] + H2O + H(+). Its function is as follows. Cytochromes P450 are a group of heme-thiolate monooxygenases. In liver microsomes, this enzyme is involved in an NADPH-dependent electron transport pathway. It oxidizes a variety of structurally unrelated compounds, including steroids, fatty acids, and xenobiotics. This chain is Cytochrome P450 2C20 (CYP2C20), found in Macaca fascicularis (Crab-eating macaque).